A 194-amino-acid chain; its full sequence is WASH complex subunit 3 (194 aa).

At Met-1 the chain carries N-acetylmethionine. Positions Thr-46–Ser-74 form a coiled coil. The segment covering Thr-98–Thr-123 has biased composition (polar residues). 2 disordered regions span residues Thr-98 to Glu-125 and Ser-158 to Asp-194.

The protein belongs to the CCDC53 family. Component of the WASH core complex also described as WASH regulatory complex (SHRC) composed of WASHC1, WASHC2, WASHC3, WASHC4 and WASHC5. The WASH core complex associates via WASHC2 with the F-actin-capping protein dimer (formed by CAPZA1, CAPZA2 or CAPZA3 and CAPZB) in a transient or substoichiometric manner which was initially described as WASH complex.

The protein localises to the early endosome. In terms of biological role, acts as a component of the WASH core complex that functions as a nucleation-promoting factor (NPF) at the surface of endosomes, where it recruits and activates the Arp2/3 complex to induce actin polymerization, playing a key role in the fission of tubules that serve as transport intermediates during endosome sorting. This chain is WASH complex subunit 3, found in Bos taurus (Bovine).